Consider the following 647-residue polypeptide: Protein arginine N-methyltransferase 7 (647 aa).

2 SAM-dependent MTase PRMT-type domains span residues 12 to 332 and 337 to 647; these read EREW…FSLW and GKDK…SEDS. Active-site residues include Glu-140 and Glu-149.

This sequence belongs to the class I-like SAM-binding methyltransferase superfamily. Protein arginine N-methyltransferase family. PRMT7 subfamily.

In terms of biological role, arginine methyltransferase that can both catalyze the formation of omega-N monomethylarginine (MMA) and symmetrical dimethylarginine (sDMA). The polypeptide is Protein arginine N-methyltransferase 7 (prmt-7) (Caenorhabditis elegans).